The following is a 1001-amino-acid chain: TonB-dependent receptor P3 (1001 aa).

The signal sequence occupies residues 1-26; sequence MTTKNNKQLKSVLFMFLLLIGAYVKA. The TonB box motif lies at 109–116; it reads EEIVVIGY. Positions 120-232 constitute a TBDR plug domain; the sequence is KKSDVSGSVS…ANGVIMVTTK (113 aa). A TBDR beta-barrel domain is found at 238-1001; that stretch reads KPTLELNTSY…TFTMGLNMKF (764 aa). Positions 984 to 1001 match the TonB C-terminal box motif; that stretch reads YGSYPNVRTFTMGLNMKF.

The protein belongs to the TonB-dependent receptor family.

It is found in the cell outer membrane. TonB-dependent receptor probably involved in ulvan degradation. Ulvan is the main polysaccharide component of the Ulvales (green seaweed) cell wall. It is composed of disaccharide building blocks comprising 3-sulfated rhamnose (Rha3S) linked to D-glucuronic acid (GlcA), L-iduronic acid (IduA), or D-xylose (Xyl). The TonB-dependent receptor may mediate transport of ulvan oligosaccharides from the surface of the outer membrane to the periplasm for subsequent degradation. The protein is TonB-dependent receptor P3 of Formosa agariphila (strain DSM 15362 / KCTC 12365 / LMG 23005 / KMM 3901 / M-2Alg 35-1).